The following is a 373-amino-acid chain: Plasmepsin VIII (373 aa).

The first 21 residues, 1-21, serve as a signal peptide directing secretion; that stretch reads MNKFFVFPLLLILNSIVLVKS. A Peptidase A1 domain is found at 50 to 370; that stretch reads FIGEISIGNP…EKDNMRIGLA (321 aa). Residues D68 and D258 contribute to the active site.

This sequence belongs to the peptidase A1 family.

Functionally, during the development in the mosquito vector, plays an essential role in sporozoite egress from the oocyst and sporozoite gliding motility, which is required for the invasion of salivary glands and subsequent transmission to the host. This Plasmodium berghei (strain Anka) protein is Plasmepsin VIII.